We begin with the raw amino-acid sequence, 118 residues long: uncharacterized protein (118 aa).

Residues 98–118 (KGKGNEGREEAEEPLEEPEEG) are disordered. Over residues 106–118 (EEAEEPLEEPEEG) the composition is skewed to acidic residues.

It belongs to the UPF0440 family.

This is an uncharacterized protein from Pyrococcus abyssi (strain GE5 / Orsay).